A 71-amino-acid chain; its full sequence is Brevinin-1HN1 (71 aa).

An N-terminal signal peptide occupies residues 1 to 22 (MFTSKKPLLLLFFLGTINLSLC). A propeptide spanning residues 23 to 45 (EQERDADEEERRDDPDERDVEVE) is cleaved from the precursor. Cys65 and Cys71 are oxidised to a cystine.

As to expression, expressed by the skin glands.

The protein localises to the secreted. Its function is as follows. Has antimicrobial activity against Gram-positive bacteria and fungi but has weak or no activity against a range of Gram-negative bacteria except P.faecalis. Active against the Gram-positive bacteria E.faecium 091299 (MIC=19 uM), E.faecalis 981 (MIC=19 uM), S.aureus ATCC 25923 (MIC=1.2 uM), S.carnosus KHS (MIC=4.8 uM), B.licheniformis X39 (MIC=2.4 uM) and R.rhodochrous X15 (MIC=1.2 uM). Active against the Gram-negative bacterium P.faecalis X29 (MIC=4.8 uM), is virtually inactive against E.coli ATCC 25922 (MIC=150 uM) and inactive against P.aeruginosa and S.typhi. Has antifungal activity against C.albicans ATCC 2002 (MIC=2.4 uM) and is also active against the slime mold 090223 (MIC=1.2 uM). Has low hemolytic activity against human erythrocytes (LC(50)=75 uM). The chain is Brevinin-1HN1 from Odorrana hainanensis (Odor frog).